The following is a 336-amino-acid chain: Probable aquaglyceroporin-2 (336 aa).

The interval 1–46 is disordered; sequence MPISTINDSISESSVHKSSIPTKVEMSQNEKYSEAPSEAPTIPPPP. Topologically, residues 1-64 are cytoplasmic; the sequence is MPISTINDSI…RENCQDAFSE (64 aa). A compositionally biased stretch (low complexity) spans 9 to 19; the sequence is SISESSVHKSS. A helical transmembrane segment spans residues 65–85; it reads FFGTFVLLLFGDGVVAQVVLS. Residues 86–94 are Extracellular-facing; that stretch reads RGTKGDYQS. A helical transmembrane segment spans residues 95–115; that stretch reads ISWGWGLGVMLGVYVGGKSGG. The Cytoplasmic portion of the chain corresponds to 116–135; that stretch reads HLNPAVTLANCLFRGHPWRK. The NPA 1 signature appears at 118–120; it reads NPA. The chain crosses the membrane as a helical span at residues 136-156; sequence FPIYAVAQVLGAMAAAAVVYG. The Extracellular segment spans residues 157-195; sequence NYKSAIDAYEGGPGIRTVIGENATAGVFCTYPAEFMTRT. N178 is a glycosylation site (N-linked (GlcNAc...) asparagine). A helical membrane pass occupies residues 196-216; sequence GMFFSEFIASTILQFVIFAMA. Residues 217 to 223 are Cytoplasmic-facing; that stretch reads DSANIGA. The helical transmembrane segment at 224–244 threads the bilayer; it reads GPLMPLGLFFLIFGIGACFGW. Topologically, residues 245 to 280 are extracellular; sequence ETGYAINLARDFGPRLVSYMLGYGSEVWSAGGYYFW. Residues 251–253 carry the NPA 2 motif; that stretch reads NLA. The chain crosses the membrane as a helical span at residues 281 to 301; sequence IPMVAPFFGCAFGGFLYDVFI. Over 302 to 336 the chain is Cytoplasmic; it reads YTGPSPINTPGMGFGRLVSPRRSTWSNTYNANSPV.

The protein belongs to the MIP/aquaporin (TC 1.A.8) family.

The protein resides in the membrane. It catalyses the reaction H2O(in) = H2O(out). It carries out the reaction glycerol(in) = glycerol(out). Functionally, probable water/glycerol channel that may have redundant functions with FgAQP4. The polypeptide is Probable aquaglyceroporin-2 (Gibberella zeae (strain ATCC MYA-4620 / CBS 123657 / FGSC 9075 / NRRL 31084 / PH-1) (Wheat head blight fungus)).